We begin with the raw amino-acid sequence, 335 residues long: Aspartate carbamoyltransferase catalytic subunit (335 aa).

2 residues coordinate carbamoyl phosphate: R81 and T82. K109 serves as a coordination point for L-aspartate. Carbamoyl phosphate is bound by residues R131, H159, and Q162. Positions 192 and 246 each coordinate L-aspartate. Carbamoyl phosphate-binding residues include G287 and P288.

It belongs to the aspartate/ornithine carbamoyltransferase superfamily. ATCase family. Heterododecamer (2C3:3R2) of six catalytic PyrB chains organized as two trimers (C3), and six regulatory PyrI chains organized as three dimers (R2).

The enzyme catalyses carbamoyl phosphate + L-aspartate = N-carbamoyl-L-aspartate + phosphate + H(+). It participates in pyrimidine metabolism; UMP biosynthesis via de novo pathway; (S)-dihydroorotate from bicarbonate: step 2/3. Functionally, catalyzes the condensation of carbamoyl phosphate and aspartate to form carbamoyl aspartate and inorganic phosphate, the committed step in the de novo pyrimidine nucleotide biosynthesis pathway. In Caulobacter sp. (strain K31), this protein is Aspartate carbamoyltransferase catalytic subunit.